The primary structure comprises 171 residues: Secreted thaumatin-like protein calA (171 aa).

The signal sequence occupies residues 1 to 18 (MLFNKIISLAATLATASA). 2 N-linked (GlcNAc...) asparagine glycosylation sites follow: asparagine 37 and asparagine 141. 2 disulfides stabilise this stretch: cysteine 130/cysteine 157 and cysteine 135/cysteine 142.

The protein belongs to the thaumatin family.

Its subcellular location is the secreted. The protein resides in the extracellular space. The protein localises to the extracellular matrix. It localises to the cell wall. Functionally, secreted thaumatin-like protein that, with cetA, plays an essential role in early conidial germination with a possible role in cell wall remodeling. This is Secreted thaumatin-like protein calA from Emericella nidulans (strain FGSC A4 / ATCC 38163 / CBS 112.46 / NRRL 194 / M139) (Aspergillus nidulans).